The following is a 1368-amino-acid chain: Protein suppressor 2 of zeste (1368 aa).

The RING-type zinc-finger motif lies at Cys-35–Lys-74. 10 disordered regions span residues Ser-245–Leu-321, Gln-448–Gln-628, Thr-640–Gln-718, Ala-861–Cys-903, Ala-935–Ala-1001, Ser-1057–Asn-1103, Ile-1116–Leu-1141, Ala-1161–Arg-1193, Ser-1211–Thr-1271, and Val-1298–Pro-1322. The span at Pro-449–Tyr-461 shows a compositional bias: polar residues. A compositionally biased stretch (low complexity) spans Ser-462–Ser-495. Basic residues predominate over residues Ser-496 to Lys-506. 2 stretches are compositionally biased toward low complexity: residues Ala-599–Gln-628 and Pro-672–Gln-689. 2 stretches are compositionally biased toward polar residues: residues Leu-936–Arg-953 and Leu-962–Ser-977. Composition is skewed to low complexity over residues Asn-1078–Asn-1099, Asn-1119–Gly-1138, Ala-1161–Ala-1183, and Ser-1231–Pro-1263.

The protein localises to the nucleus. In terms of biological role, regulates expression of the homeotic selector genes by influencing higher-order chromatin structure through interaction with other proteins. The polypeptide is Protein suppressor 2 of zeste (Su(z)2) (Drosophila melanogaster (Fruit fly)).